The following is a 496-amino-acid chain: Tripartite motif-containing protein 30A (496 aa).

An RING-type zinc finger spans residues cysteine 15 to arginine 59. Residues glutamine 91–isoleucine 132 form a B box-type zinc finger. Residues cysteine 96, histidine 99, cysteine 118, and histidine 124 each contribute to the Zn(2+) site. Positions asparagine 173–histidine 239 form a coiled coil. The tract at residues lysine 205–glutamate 210 is highly hydrophilic. Positions threonine 268 to threonine 276 match the Nuclear localization signal motif. The region spanning aspartate 281–serine 496 is the B30.2/SPRY domain.

Homomultimer. Interacts with NR2C2/TAK1, TAB2 and TAB3. Does not interact with NLRP3, NLRC4 or TAB1. As to expression, highly expressed in spleen and lymph nodes (at protein level).

It localises to the cytoplasm. The protein resides in the nucleus. Trans-acting factor that regulates gene expression of interleukin 2 receptor alpha chain. May affect IL2R-alpha expression through cis-acting negative regulatory elements or through competition with proteins that bind to enhancer or activator sequences. Negatively regulates Toll-like receptor (TLR)-mediated activation of NFKB by promoting degradation of TAB2 and TAB3 and preventing TRAF6 autoubiquitination. Negatively regulates production of reactive oxygen species (ROS) which inhibits activation of the NLRP3 inflammasome complex. This, in turn, regulates activation of CASP1 and subsequent cleavage of IL1B and IL18. No activity detected against a range of retroviruses including a number of lentiviruses, gammaretroviruses and betaretroviruses. The polypeptide is Tripartite motif-containing protein 30A (Trim30a) (Mus musculus (Mouse)).